The chain runs to 588 residues: L-fucose isomerase (588 aa).

Residues E335 and D359 each act as proton acceptor in the active site. Mn(2+) contacts are provided by E335, D359, and H525.

The protein belongs to the L-fucose isomerase family. The cofactor is Mn(2+).

The protein resides in the cytoplasm. The enzyme catalyses L-fucose = L-fuculose. The protein operates within carbohydrate degradation; L-fucose degradation; L-lactaldehyde and glycerone phosphate from L-fucose: step 1/3. Its function is as follows. Converts the aldose L-fucose into the corresponding ketose L-fuculose. The chain is L-fucose isomerase from Streptococcus pneumoniae (strain 70585).